The following is a 634-amino-acid chain: Growth hormone receptor (634 aa).

An N-terminal signal peptide occupies residues 1 to 18 (MDLWQLLLTLAVAGSSDA). The Extracellular portion of the chain corresponds to 19–260 (FSGSEATPAF…NPSACEEDFQ (242 aa)). Asn46 is a glycosylation site (N-linked (GlcNAc...) asparagine). Residues Cys56 and Cys66 are joined by a disulfide bond. N-linked (GlcNAc...) asparagine glycosylation occurs at Asn73. The cysteines at positions 97 and 108 are disulfide-linked. N-linked (GlcNAc...) asparagine glycosylation occurs at Asn111. A disulfide bridge connects residues Cys122 and Cys136. Residues 147–250 (PPVGLNWTLL…EVLLITFPQM (104 aa)) enclose the Fibronectin type-III domain. N-linked (GlcNAc...) asparagine glycans are attached at residues Asn152, Asn157, and Asn196. The short motif at 236-240 (YGKFS) is the WSXWS motif element. The helical transmembrane segment at 261-284 (FPWFLIIIFGILGLAVTLYLLIFS) threads the bilayer. At 285-634 (KQQRIKMLIL…STDQLNKIMP (350 aa)) the chain is on the cytoplasmic side. Positions 290–375 (KMLILPPVPV…HEKSLNIFGA (86 aa)) are required for JAK2 binding. The Box 1 motif signature appears at 293 to 301 (ILPPVPVPK). The UbE motif motif lies at 336–345 (DSWVEFIELD). Ser337 bears the Phosphoserine mark.

The protein belongs to the type I cytokine receptor family. Type 1 subfamily. As to quaternary structure, on growth hormone (GH) binding, forms homodimers and binds JAK2 via a box 1-containing domain. The soluble form (GHBP) is produced by phorbol ester-promoted proteolytic cleavage at the cell surface (shedding) by ADAM17/TACE. Shedding is inhibited by growth hormone (GH) binding to the receptor probably due to a conformational change in GHR rendering the receptor inaccessible to ADAM17. Post-translationally, on GH binding, phosphorylated on tyrosine residues in the cytoplasmic domain by JAK2. In terms of processing, ubiquitinated by the ECS(SOCS2) complex following ligand-binding and phosphorylation by JAK2, leading to its degradation by the proteasome. Regulation by the ECS(SOCS2) complex acts as a negative feedback loop of growth hormone receptor signaling. Ubiquitination is not sufficient for GHR internalization.

The protein resides in the cell membrane. The protein localises to the secreted. Receptor for pituitary gland growth hormone (GH1) involved in regulating postnatal body growth. On ligand binding, couples to the JAK2/STAT5 pathway. Its function is as follows. The soluble form (GHBP) acts as a reservoir of growth hormone in plasma and may be a modulator/inhibitor of GH signaling. The protein is Growth hormone receptor (GHR) of Bos taurus (Bovine).